The chain runs to 442 residues: Trigger factor (442 aa).

In terms of domain architecture, PPIase FKBP-type spans 163–248 (YDRVTINYCI…IIKIEKKQEL (86 aa)).

This sequence belongs to the FKBP-type PPIase family. Tig subfamily.

It is found in the cytoplasm. The enzyme catalyses [protein]-peptidylproline (omega=180) = [protein]-peptidylproline (omega=0). Involved in protein export. Acts as a chaperone by maintaining the newly synthesized protein in an open conformation. Functions as a peptidyl-prolyl cis-trans isomerase. The chain is Trigger factor (tig) from Buchnera aphidicola subsp. Acyrthosiphon pisum (strain APS) (Acyrthosiphon pisum symbiotic bacterium).